A 105-amino-acid polypeptide reads, in one-letter code: Large ribosomal subunit protein uL24 (105 aa).

This sequence belongs to the universal ribosomal protein uL24 family. In terms of assembly, part of the 50S ribosomal subunit.

In terms of biological role, one of two assembly initiator proteins, it binds directly to the 5'-end of the 23S rRNA, where it nucleates assembly of the 50S subunit. Its function is as follows. One of the proteins that surrounds the polypeptide exit tunnel on the outside of the subunit. This Vibrio atlanticus (strain LGP32) (Vibrio splendidus (strain Mel32)) protein is Large ribosomal subunit protein uL24.